A 330-amino-acid polypeptide reads, in one-letter code: 4-hydroxythreonine-4-phosphate dehydrogenase (330 aa).

Substrate is bound by residues His-136 and Thr-137. A divalent metal cation is bound by residues His-166, His-211, and His-266. Residues Lys-274, Asn-283, and Arg-292 each contribute to the substrate site.

This sequence belongs to the PdxA family. Homodimer. Zn(2+) is required as a cofactor. It depends on Mg(2+) as a cofactor. Requires Co(2+) as cofactor.

It is found in the cytoplasm. It carries out the reaction 4-(phosphooxy)-L-threonine + NAD(+) = 3-amino-2-oxopropyl phosphate + CO2 + NADH. It participates in cofactor biosynthesis; pyridoxine 5'-phosphate biosynthesis; pyridoxine 5'-phosphate from D-erythrose 4-phosphate: step 4/5. Its function is as follows. Catalyzes the NAD(P)-dependent oxidation of 4-(phosphooxy)-L-threonine (HTP) into 2-amino-3-oxo-4-(phosphooxy)butyric acid which spontaneously decarboxylates to form 3-amino-2-oxopropyl phosphate (AHAP). This is 4-hydroxythreonine-4-phosphate dehydrogenase from Erwinia tasmaniensis (strain DSM 17950 / CFBP 7177 / CIP 109463 / NCPPB 4357 / Et1/99).